Reading from the N-terminus, the 56-residue chain is MAVQKSKKSRSRRGMRRSHDAVTPENLSVDPVSGETHRRHHITADGFYKGVKVIAV.

Residues 1–16 (MAVQKSKKSRSRRGMR) show a composition bias toward basic residues. The segment at 1 to 38 (MAVQKSKKSRSRRGMRRSHDAVTPENLSVDPVSGETHR) is disordered.

It belongs to the bacterial ribosomal protein bL32 family.

The protein is Large ribosomal subunit protein bL32 of Colwellia psychrerythraea (strain 34H / ATCC BAA-681) (Vibrio psychroerythus).